Consider the following 605-residue polypeptide: Elongation factor 4 (605 aa).

The tr-type G domain maps to 11–193 (KNIRNFSIIA…TLVDVIPAPT (183 aa)). GTP-binding positions include 23–28 (DHGKST) and 140–143 (NKID).

The protein belongs to the TRAFAC class translation factor GTPase superfamily. Classic translation factor GTPase family. LepA subfamily.

It localises to the cell inner membrane. It carries out the reaction GTP + H2O = GDP + phosphate + H(+). Functionally, required for accurate and efficient protein synthesis under certain stress conditions. May act as a fidelity factor of the translation reaction, by catalyzing a one-codon backward translocation of tRNAs on improperly translocated ribosomes. Back-translocation proceeds from a post-translocation (POST) complex to a pre-translocation (PRE) complex, thus giving elongation factor G a second chance to translocate the tRNAs correctly. Binds to ribosomes in a GTP-dependent manner. This Acinetobacter baumannii (strain AB307-0294) protein is Elongation factor 4.